Consider the following 429-residue polypeptide: Glutamyl-tRNA reductase (429 aa).

Substrate contacts are provided by residues 49–52, S107, 112–114, and Q118; these read TCNR and EPQ. C50 (nucleophile) is an active-site residue. 187 to 192 is an NADP(+) binding site; it reads GAGKTI.

The protein belongs to the glutamyl-tRNA reductase family. In terms of assembly, homodimer.

The enzyme catalyses (S)-4-amino-5-oxopentanoate + tRNA(Glu) + NADP(+) = L-glutamyl-tRNA(Glu) + NADPH + H(+). It participates in porphyrin-containing compound metabolism; protoporphyrin-IX biosynthesis; 5-aminolevulinate from L-glutamyl-tRNA(Glu): step 1/2. Functionally, catalyzes the NADPH-dependent reduction of glutamyl-tRNA(Glu) to glutamate 1-semialdehyde (GSA). The chain is Glutamyl-tRNA reductase from Marinobacter nauticus (strain ATCC 700491 / DSM 11845 / VT8) (Marinobacter aquaeolei).